The chain runs to 239 residues: uncharacterized protein (239 aa).

The first 19 residues, 1–19 (MPLLHRTIIFLQLLGTISS), serve as a signal peptide directing secretion. N-linked (GlcNAc...) asparagine glycans are attached at residues N44, N58, N72, N92, N109, N136, N172, N192, and N213.

The protein localises to the secreted. This is an uncharacterized protein from Caenorhabditis elegans.